The sequence spans 498 residues: ATP synthase subunit beta, chloroplastic (498 aa).

172-179 (GGAGVGKT) contributes to the ATP binding site.

This sequence belongs to the ATPase alpha/beta chains family. As to quaternary structure, F-type ATPases have 2 components, CF(1) - the catalytic core - and CF(0) - the membrane proton channel. CF(1) has five subunits: alpha(3), beta(3), gamma(1), delta(1), epsilon(1). CF(0) has four main subunits: a(1), b(1), b'(1) and c(9-12).

It is found in the plastid. It localises to the chloroplast thylakoid membrane. It carries out the reaction ATP + H2O + 4 H(+)(in) = ADP + phosphate + 5 H(+)(out). Produces ATP from ADP in the presence of a proton gradient across the membrane. The catalytic sites are hosted primarily by the beta subunits. The polypeptide is ATP synthase subunit beta, chloroplastic (Populus trichocarpa (Western balsam poplar)).